The primary structure comprises 388 residues: Succinate--CoA ligase [ADP-forming] subunit beta (388 aa).

Residues 9-244 (KQLFARYGLP…QSQEDPREAQ (236 aa)) enclose the ATP-grasp domain. ATP-binding positions include K46, 53 to 55 (GRG), E99, T102, and E107. 2 residues coordinate Mg(2+): N199 and D213. Substrate is bound by residues N264 and 321-323 (GIV).

Belongs to the succinate/malate CoA ligase beta subunit family. As to quaternary structure, heterotetramer of two alpha and two beta subunits. The cofactor is Mg(2+).

It catalyses the reaction succinate + ATP + CoA = succinyl-CoA + ADP + phosphate. The enzyme catalyses GTP + succinate + CoA = succinyl-CoA + GDP + phosphate. The protein operates within carbohydrate metabolism; tricarboxylic acid cycle; succinate from succinyl-CoA (ligase route): step 1/1. In terms of biological role, succinyl-CoA synthetase functions in the citric acid cycle (TCA), coupling the hydrolysis of succinyl-CoA to the synthesis of either ATP or GTP and thus represents the only step of substrate-level phosphorylation in the TCA. The beta subunit provides nucleotide specificity of the enzyme and binds the substrate succinate, while the binding sites for coenzyme A and phosphate are found in the alpha subunit. The sequence is that of Succinate--CoA ligase [ADP-forming] subunit beta from Klebsiella pneumoniae (strain 342).